Consider the following 236-residue polypeptide: Cancer/testis antigen 55 (236 aa).

Positions 57–84 are disordered; the sequence is RSSADVETGDNPLKAEPNLPAAVEEQSP.

Interacts with GABARAP; this interaction may be important for GABARAP protein stability. Interacts with LAMP2; this interaction may be important for LAMP2 protein stability. In terms of tissue distribution, expressed in spermatozoa (at protein level).

Its subcellular location is the cytoplasm. It localises to the cytoplasmic vesicle. The protein localises to the secretory vesicle. It is found in the acrosome. The protein resides in the cell projection. Its subcellular location is the cilium. It localises to the flagellum. Plays a role in spermatogenesis, possibly acting in the regulation of the autophagy pathway. The polypeptide is Cancer/testis antigen 55 (Ct55) (Mus musculus (Mouse)).